Reading from the N-terminus, the 270-residue chain is Phosphatidate cytidylyltransferase (270 aa).

7 helical membrane passes run 19-39 (LWLT…IGLA), 53-73 (TAFS…LLIL), 76-96 (GALL…VTQW), 101-121 (GWPA…SLLR), 126-146 (FGFT…IAAY), 183-203 (LVAS…ALLL), and 248-268 (ALLY…AIFF).

This sequence belongs to the CDS family.

It is found in the cell inner membrane. The enzyme catalyses a 1,2-diacyl-sn-glycero-3-phosphate + CTP + H(+) = a CDP-1,2-diacyl-sn-glycerol + diphosphate. The protein operates within phospholipid metabolism; CDP-diacylglycerol biosynthesis; CDP-diacylglycerol from sn-glycerol 3-phosphate: step 3/3. The chain is Phosphatidate cytidylyltransferase (cdsA) from Brucella melitensis biotype 1 (strain ATCC 23456 / CCUG 17765 / NCTC 10094 / 16M).